Reading from the N-terminus, the 327-residue chain is Phosphate acyltransferase (327 aa).

The protein belongs to the PlsX family. As to quaternary structure, homodimer. Probably interacts with PlsY.

It is found in the cytoplasm. The enzyme catalyses a fatty acyl-[ACP] + phosphate = an acyl phosphate + holo-[ACP]. Its pathway is lipid metabolism; phospholipid metabolism. In terms of biological role, catalyzes the reversible formation of acyl-phosphate (acyl-PO(4)) from acyl-[acyl-carrier-protein] (acyl-ACP). This enzyme utilizes acyl-ACP as fatty acyl donor, but not acyl-CoA. This is Phosphate acyltransferase from Thermotoga neapolitana (strain ATCC 49049 / DSM 4359 / NBRC 107923 / NS-E).